We begin with the raw amino-acid sequence, 608 residues long: V-type ATP synthase subunit I (608 aa).

9 consecutive transmembrane segments (helical) span residues 308-325 (ISFIFMLFFFVFFGMIIG), 327-346 (AAYGVIFFLIGILLSLSFLL), 356-376 (GLIFYLSVSSILYGAMTGTWF), 405-425 (IIFICFSIGVLQISLAHVWNF), 438-458 (IAQIGWLMCIVGLYYLVLNLI), 464-484 (FPMYNVVYNVIYFGVALVFVF), 495-515 (CILKSFGGIIEQFLTTVSGFA), 517-537 (IISYIRLFAVGLAGLSISASF), and 550-570 (IGLIVAGIIVILFGHVLNIML).

The protein belongs to the V-ATPase 116 kDa subunit family.

The protein resides in the cell membrane. In terms of biological role, produces ATP from ADP in the presence of a proton gradient across the membrane. This is V-type ATP synthase subunit I (atpI) from Borreliella burgdorferi (strain ATCC 35210 / DSM 4680 / CIP 102532 / B31) (Borrelia burgdorferi).